Consider the following 215-residue polypeptide: Adenylate kinase (215 aa).

10 to 15 (GSGKGT) lines the ATP pocket. The segment at 30–59 (STGDLFRTNIENDTPLGKEIKQIVENGQLV) is NMP. AMP is bound by residues T31, R36, 57–59 (QLV), 85–88 (GFPR), and Q92. The interval 121 to 158 (GRRICQSCCKIFNIYTLPTKEKEICDFCQGILYQRKDD) is LID. R122 contacts ATP. Positions 125 and 128 each coordinate Zn(2+). 131–132 (IF) lines the ATP pocket. 2 residues coordinate Zn(2+): C145 and C148. 2 residues coordinate AMP: R155 and R166. K194 serves as a coordination point for ATP.

It belongs to the adenylate kinase family. As to quaternary structure, monomer.

It is found in the cytoplasm. The catalysed reaction is AMP + ATP = 2 ADP. The protein operates within purine metabolism; AMP biosynthesis via salvage pathway; AMP from ADP: step 1/1. Catalyzes the reversible transfer of the terminal phosphate group between ATP and AMP. Plays an important role in cellular energy homeostasis and in adenine nucleotide metabolism. This Borrelia recurrentis (strain A1) protein is Adenylate kinase.